A 465-amino-acid polypeptide reads, in one-letter code: 2-halobenzoate 1,2-dioxygenase large subunit (465 aa).

One can recognise a Rieske domain in the interval 56–154 (WVFLAHESQV…GFNVDGSHDL (99 aa)). Residues Cys-98, His-100, Cys-118, and His-121 each contribute to the [2Fe-2S] cluster site. Fe cation is bound by residues His-227 and His-232.

Belongs to the bacterial ring-hydroxylating dioxygenase alpha subunit family. As to quaternary structure, heterohexamer of 3 large (CbdA) subunits and 3 small (CbdB) subunits. The heterohexamer is part of 2-halobenzoate dioxygenase two component enzyme system. The other component is a NADH:acceptor reductase (CdbC). [2Fe-2S] cluster serves as cofactor. The cofactor is Fe(2+).

It catalyses the reaction a 2-halobenzoate + NADH + O2 + H(+) = a halide anion + catechol + CO2 + NAD(+). The protein operates within xenobiotic degradation; benzoate degradation via CoA ligation. Component of 2-halobenzoate dioxygenase multicomponent enzyme system which catalyzes the incorporation of both atoms of molecular oxygen into 2-halobenzoate to form catechol. The sequence is that of 2-halobenzoate 1,2-dioxygenase large subunit (cbdA) from Burkholderia cepacia (Pseudomonas cepacia).